Here is a 446-residue protein sequence, read N- to C-terminus: Argininosuccinate lyase (446 aa).

The protein belongs to the lyase 1 family. Argininosuccinate lyase subfamily.

The protein localises to the cytoplasm. The catalysed reaction is 2-(N(omega)-L-arginino)succinate = fumarate + L-arginine. The protein operates within amino-acid biosynthesis; L-arginine biosynthesis; L-arginine from L-ornithine and carbamoyl phosphate: step 3/3. This is Argininosuccinate lyase from Parabacteroides distasonis (strain ATCC 8503 / DSM 20701 / CIP 104284 / JCM 5825 / NCTC 11152).